We begin with the raw amino-acid sequence, 140 residues long: Sex-regulated protein janus-B (140 aa).

R42 serves as a coordination point for substrate. The active-site Proton acceptor is the H69. 110–112 (SRT) is a binding site for substrate.

The protein belongs to the janus family.

In terms of biological role, janA and janB regulate somatic sex differentiation. This Drosophila teissieri (Fruit fly) protein is Sex-regulated protein janus-B (janB).